The following is a 279-amino-acid chain: Thymidylate synthase 1 (279 aa).

141–142 contributes to the dUMP binding site; the sequence is RR. Cys-161 (nucleophile) is an active-site residue. DUMP contacts are provided by residues 181–184, Asn-192, and 222–224; these read RSND and HVY. Asp-184 serves as a coordination point for (6R)-5,10-methylene-5,6,7,8-tetrahydrofolate. Residue Ala-278 coordinates (6R)-5,10-methylene-5,6,7,8-tetrahydrofolate.

It belongs to the thymidylate synthase family. Bacterial-type ThyA subfamily. In terms of assembly, homodimer.

The protein resides in the cytoplasm. The catalysed reaction is dUMP + (6R)-5,10-methylene-5,6,7,8-tetrahydrofolate = 7,8-dihydrofolate + dTMP. The protein operates within pyrimidine metabolism; dTTP biosynthesis. Its function is as follows. Catalyzes the reductive methylation of 2'-deoxyuridine-5'-monophosphate (dUMP) to 2'-deoxythymidine-5'-monophosphate (dTMP) while utilizing 5,10-methylenetetrahydrofolate (mTHF) as the methyl donor and reductant in the reaction, yielding dihydrofolate (DHF) as a by-product. This enzymatic reaction provides an intracellular de novo source of dTMP, an essential precursor for DNA biosynthesis. The sequence is that of Thymidylate synthase 1 from Bacillus spizizenii (strain ATCC 23059 / NRRL B-14472 / W23) (Bacillus subtilis subsp. spizizenii).